A 512-amino-acid chain; its full sequence is Podocan-like protein 1 (512 aa).

A signal peptide spans 1 to 26; the sequence is MAESGLAMWPSLLLLLLLPGPPPVAG. Positions 37–74 constitute an LRRNT domain; that stretch reads ESLQPLPRACPLRCSCPRVDTVDCDGLDLRVFPDNITR. An N-linked (GlcNAc...) asparagine glycan is attached at asparagine 71. LRR repeat units follow at residues 75 to 96, 99 to 119, 125 to 146, 147 to 167, 170 to 193, 196 to 216, 217 to 238, 241 to 261, 267 to 288, 289 to 309, 312 to 332, 338 to 359, 360 to 380, 383 to 396, 409 to 430, 431 to 451, and 454 to 474; these read AAQH…ELSR, GLRT…PDEA, QLQH…LPRS, LRVA…TFGE, ALRS…AFRG, AIAT…SLPP, SLER…ALSR, QLRE…DATT, SLEY…LPRT, LAIL…RLHG, GLRY…PAGA, GLHT…LPRR, LRAL…DLVA, GLTE…RLAS, ALRS…LPTG, LRTL…PLAG, and QLRE…GPGT.

It belongs to the small leucine-rich proteoglycan (SLRP) family. SLRP class V subfamily. In terms of processing, N-glycosylated.

It is found in the secreted. The protein resides in the extracellular space. It localises to the extracellular matrix. This Homo sapiens (Human) protein is Podocan-like protein 1 (PODNL1).